The chain runs to 719 residues: Ribosomal RNA large subunit methyltransferase K/L (719 aa).

Residues 43-154 (IGYKACLWSR…KGKANITLDL (112 aa)) enclose the THUMP domain.

Belongs to the methyltransferase superfamily. RlmKL family.

It localises to the cytoplasm. The catalysed reaction is guanosine(2445) in 23S rRNA + S-adenosyl-L-methionine = N(2)-methylguanosine(2445) in 23S rRNA + S-adenosyl-L-homocysteine + H(+). It carries out the reaction guanosine(2069) in 23S rRNA + S-adenosyl-L-methionine = N(2)-methylguanosine(2069) in 23S rRNA + S-adenosyl-L-homocysteine + H(+). In terms of biological role, specifically methylates the guanine in position 2445 (m2G2445) and the guanine in position 2069 (m7G2069) of 23S rRNA. The chain is Ribosomal RNA large subunit methyltransferase K/L from Aeromonas salmonicida (strain A449).